The sequence spans 62 residues: Large ribosomal subunit protein bL32 (62 aa).

Residues 1-16 show a composition bias toward basic residues; the sequence is MAVPKRKTSPMKRGFR. Residues 1–62 form a disordered region; the sequence is MAVPKRKTSP…QILTPKNKEA (62 aa). Positions 28 to 44 are enriched in basic and acidic residues; sequence VEDKDSGELRRPHHVDL.

Belongs to the bacterial ribosomal protein bL32 family.

This Methylocella silvestris (strain DSM 15510 / CIP 108128 / LMG 27833 / NCIMB 13906 / BL2) protein is Large ribosomal subunit protein bL32.